The following is a 159-amino-acid chain: Xanthine dehydrogenase iron-sulfur-binding subunit (159 aa).

The 76-residue stretch at isoleucine 7–glutamate 82 folds into the 2Fe-2S ferredoxin-type domain. The [2Fe-2S] cluster site is built by cysteine 44, cysteine 49, and cysteine 52.

In terms of assembly, heterotrimer of XdhA, XdhB and XdhC. Requires [2Fe-2S] cluster as cofactor.

It participates in purine metabolism; hypoxanthine degradation; urate from hypoxanthine: step 1/2. In terms of biological role, iron-sulfur subunit of the xanthine dehydrogenase complex. This is Xanthine dehydrogenase iron-sulfur-binding subunit (xdhC) from Escherichia coli O157:H7.